Consider the following 343-residue polypeptide: Methylthioribose-1-phosphate isomerase (343 aa).

Residues Arg-48 to Ala-50, Arg-88, and Gln-193 contribute to the substrate site. Asp-234 acts as the Proton donor in catalysis. Asn-244–Lys-245 contributes to the substrate binding site.

The protein belongs to the eIF-2B alpha/beta/delta subunits family. MtnA subfamily.

The catalysed reaction is 5-(methylsulfanyl)-alpha-D-ribose 1-phosphate = 5-(methylsulfanyl)-D-ribulose 1-phosphate. It functions in the pathway amino-acid biosynthesis; L-methionine biosynthesis via salvage pathway; L-methionine from S-methyl-5-thio-alpha-D-ribose 1-phosphate: step 1/6. In terms of biological role, catalyzes the interconversion of methylthioribose-1-phosphate (MTR-1-P) into methylthioribulose-1-phosphate (MTRu-1-P). The polypeptide is Methylthioribose-1-phosphate isomerase (Thermotoga petrophila (strain ATCC BAA-488 / DSM 13995 / JCM 10881 / RKU-1)).